Here is a 598-residue protein sequence, read N- to C-terminus: Arylsulfate sulfotransferase AssT (598 aa).

The first 27 residues, 1–27 (MFDKYRKTLVAGTVAITLGLSASGVMA), serve as a signal peptide directing secretion. The 4-methylumbelliferone site is built by histidine 279 and histidine 383. A disulfide bond links cysteine 445 and cysteine 451. 4-methylumbelliferone is bound at residue histidine 463. Catalysis depends on histidine 463, which acts as the Nucleophile; sulfurylated histidine covalent intermediate.

This sequence belongs to the aryl sulfotransferase family. Homodimer. The disulfide bond is crucial for enzyme activity.

The protein resides in the periplasm. The enzyme catalyses an aryl sulfate + a phenol = an aryl sulfate + a phenol. It catalyses the reaction 4-methylumbelliferone sulfate + phenol = phenyl sulfate + 4-methylumbelliferone. In terms of biological role, catalyzes the transfer of a sulfate group from a phenyl sulfate ester to other phenolic compounds. In vitro, is able to use 4-methylumbelliferyl sulfate and p-nitrophenyl sulfate (PNS) as donor substrates with phenol as the acceptor substrate. Cannot use 3'-phosphoadenosine-5'-phophosulfate (PAPS), the donor substrate of mammalian sulfotransferase. This Escherichia coli O6:H1 (strain CFT073 / ATCC 700928 / UPEC) protein is Arylsulfate sulfotransferase AssT.